The sequence spans 311 residues: Ribosomal RNA large subunit methyltransferase F (311 aa).

It belongs to the methyltransferase superfamily. METTL16/RlmF family.

It localises to the cytoplasm. It carries out the reaction adenosine(1618) in 23S rRNA + S-adenosyl-L-methionine = N(6)-methyladenosine(1618) in 23S rRNA + S-adenosyl-L-homocysteine + H(+). In terms of biological role, specifically methylates the adenine in position 1618 of 23S rRNA. In Pectobacterium atrosepticum (strain SCRI 1043 / ATCC BAA-672) (Erwinia carotovora subsp. atroseptica), this protein is Ribosomal RNA large subunit methyltransferase F.